We begin with the raw amino-acid sequence, 462 residues long: MRILYLQNALNFTEEVVEIFGDLLNKGMNITELVARIKELTDKLGREAIEAIIEELDRIIKEDKRRKEKWVVERKDKKRLTTVLGDIEYERTYYKSKEDGRYTYLVDDALEIGRHDRIEKGVKIKLVENAIEESYERSSKKACPEELSKQTVLNAIREIGEVEVKREIKEKKEVRGLYIEADEDHVPLQDGRDETPRLVYIHEGREEKNGRNVLKNVYYKAYVGEKPEDIWIDVANYIEDNYKEEKIEKIYIAGDGAPWIKEGLEWIVKSRFVLDRYHLNKYVLKATSKEPKYRDKIWRAINEGDKEGVKKVFDELIKAAEEEREKEKIKEAKKYILNNWEGIKIYSEDEDVIGCSAEGHISHVFSARLSRNPLGWSREGLKLMAKLRVFSKNGGDLREVEWGKKKNINAGSYKLTKKQIKEAVRRVKTSTNEKINNITVLNIGKVTPIYRVLRALKYAQVI.

Belongs to the UPF0236 family.

This Caldanaerobacter subterraneus subsp. tengcongensis (strain DSM 15242 / JCM 11007 / NBRC 100824 / MB4) (Thermoanaerobacter tengcongensis) protein is UPF0236 protein TTE2489.